Here is a 194-residue protein sequence, read N- to C-terminus: Translation machinery-associated protein 22 (194 aa).

The SUI1 domain occupies 102–173 (VQIKRVERNK…DVKEWLLELY (72 aa)).

This sequence belongs to the DENR family. In terms of assembly, interacts with the 40S ribosomal subunit.

It localises to the cytoplasm. The protein is Translation machinery-associated protein 22 (tma22) of Aspergillus fumigatus (strain ATCC MYA-4609 / CBS 101355 / FGSC A1100 / Af293) (Neosartorya fumigata).